The sequence spans 192 residues: Peptidyl-tRNA hydrolase (192 aa).

Position 17 (His-17) interacts with tRNA. His-22 (proton acceptor) is an active-site residue. Positions 68, 70, and 116 each coordinate tRNA.

This sequence belongs to the PTH family. In terms of assembly, monomer.

It localises to the cytoplasm. The catalysed reaction is an N-acyl-L-alpha-aminoacyl-tRNA + H2O = an N-acyl-L-amino acid + a tRNA + H(+). Its function is as follows. Hydrolyzes ribosome-free peptidyl-tRNAs (with 1 or more amino acids incorporated), which drop off the ribosome during protein synthesis, or as a result of ribosome stalling. Functionally, catalyzes the release of premature peptidyl moieties from peptidyl-tRNA molecules trapped in stalled 50S ribosomal subunits, and thus maintains levels of free tRNAs and 50S ribosomes. In Xylella fastidiosa (strain 9a5c), this protein is Peptidyl-tRNA hydrolase.